The sequence spans 471 residues: MEADESGISLPSGPDGRKRRVSYFYEPTIGDYYYGQGHPMKPHRIRMAHSLIIHYHLHRRLEISRPSLADASDIGRFHSPEYVDFLASVSPESMGDPSAARNLRRFNVGEDCPVFDGLFDFCRASAGGSIGAAVKLNRQDADIAINWGGGLHHAKKSEASGFCYVNDIVLGILELLKMFKRVLYIDIDVHHGDGVEEAFYTTDRVMTVSFHKFGDFFPGTGHIRDVGAEKGKYYALNVPLNDGMDDESFRSLFRPLIQKVMEVYQPEAVVLQCGADSLSGDRLGCFNLSVKGHADCLRFLRSYNVPLMVLGGGGYTIRNVARCWCYETAVAVGVEPDNKLPYNEYFEYFGPDYTLHVDPSPMENLNTPKDMERIRNTLLEQLSGLIHAPSVQFQHTPPVNRVLDEPEDDMETRPKPRIWSGTATYESDSDDDDKPLHGYSCRGGATTDRDSTGEDEMDDDNPEPDVNPPSS.

Position 1 is an N-acetylmethionine (Met-1). Residues 20-333 are histone deacetylase; that stretch reads RVSYFYEPTI…WCYETAVAVG (314 aa). The Proton donor/acceptor role is filled by His-153. The Zn(2+) site is built by Asp-188, His-190, and Asp-276. Residues 389–471 are disordered; it reads PSVQFQHTPP…PEPDVNPPSS (83 aa). The segment covering 453-463 has biased composition (acidic residues); the sequence is GEDEMDDDNPE.

This sequence belongs to the histone deacetylase family. HD type 1 subfamily. Interacts with Coi1, which functions in an SCF complex that recruits regulators for ubiquitination. Interacts with AHL22. Interacts with AS1. Part of the AS1 repressor complex composed of AS1, LBD6/AS2 and HDA6. Binds to EBS and SHL. Interacts with MBD6. Interacts with HDA5. Interacts with FLD. The cofactor is Zn(2+). Not detected in leaves, stems, flowers and young siliques.

It localises to the nucleus. It is found in the nucleolus. The catalysed reaction is N(6)-acetyl-L-lysyl-[histone] + H2O = L-lysyl-[histone] + acetate. Inhibited by trichostatin A. Functionally, responsible for the deacetylation of lysine residues on the N-terminal part of the core histones (H2A, H2B, H3 and H4). Might remove acetyl residues only from specific targets, such as rDNA repeats or complex transgenes. Histone deacetylation gives a tag for epigenetic repression and plays an important role in transcriptional regulation, cell cycle progression and developmental events. Histone deacetylases act via the formation of large multiprotein complexes. Required for rRNA gene silencing in nucleolar dominance. Plays a role in transgene silencing, but this effect seems to bee independent of the histone deacetylase activity. Part of the AS1 repressor complex to regulate the KNOX expression in leaf development. Binds to KNAT1, KNAT2, and KNATM chromatin. Involved in the regulation of flowering time. Forms a histone deacetylase complex with HDA5, FLD and MSI4/FVE that represses FLC gene expression to control flowering time. In Arabidopsis thaliana (Mouse-ear cress), this protein is Histone deacetylase 6.